Consider the following 323-residue polypeptide: Ankyrin repeat and SOCS box protein 11 (323 aa).

ANK repeat units follow at residues 64 to 93, 97 to 126, 130 to 159, 162 to 191, 195 to 224, and 227 to 256; these read ADRS…NVNL, NRVS…HVNG, HGAT…KAQL, HLAS…NIDH, QLGT…SVDH, and WLDT…NLKR. Residues 273-323 enclose the SOCS box domain; it reads SVEQALLLREGPPALSQLCRLCVRKCLGRACHQAIHKLHLPEPLERFLLYQ.

The protein belongs to the ankyrin SOCS box (ASB) family. Substrate-recognition component of the ECS(ASB11) complex, composed of ASB11, CUL5, ELOB, ELOC and RNF7/RBX2.

It is found in the endoplasmic reticulum. It functions in the pathway protein modification; protein ubiquitination. In terms of biological role, substrate-recognition component of a cullin-5-RING E3 ubiquitin-protein ligase complex (ECS complex, also named CRL5 complex), which mediates the ubiquitination and subsequent proteasomal degradation of target proteins, such as BIK, DIRAS2 and RPN1. The ECS(ASB11) complex acts as a regulator of the endoplasmic reticulum unfolded protein response by mediating ubiquitination and degradation of BIK. The polypeptide is Ankyrin repeat and SOCS box protein 11 (Homo sapiens (Human)).